A 521-amino-acid polypeptide reads, in one-letter code: MALVRLLGVECRNALQRSYSTASVPTTKMFIDGKFVDSKTTEWIDLHDPATNKVVTRVPKCTQDEMESAVESSKKAFKTWSQTSILGRQQVMFKLQHLIRNNMSELAKNITKEQGKTLVDAEGDVLRGLQVVEHCCSITSLQMGETVPNIAKDMDTYSYTLPLGVTAGICPFNFPAMIPLWMFPVAITCGNTSIIKPSERVPGATMMLMELLNEAGCPPGVVNVIHGAHDAVNFICDNPTIKAVSFVGSDQAGKYIYERAGRNGKRVQSNMGAKNHGVIMADANKENTLNQLAGAAFGAAGQRCMALSTAVFVGEAKQWIPDLVERARKLKVNAGHVPGTDVGPVISPQSKQRINELVESGVKEGAKLVLDGRSIKVENFENGNFVGPTILTDVSTNMKCYTEEIFGPVLVCLTVDTVDEAVEMINNNPYGNGTAIFTTNGATARKFVNEIDVGQVGVNVPIPVPLPMFSFTGSRGSFMGDCHFYGKQGVKFYTQTKTVTQLWREGDVSHTKAAVAMPTMK.

NAD(+)-binding residues include Phe-172, Lys-196, Glu-199, Arg-200, and Ser-249. The Nucleophile role is filled by Cys-304. Glu-404 lines the NAD(+) pocket.

This sequence belongs to the aldehyde dehydrogenase family. Homotetramer.

The protein localises to the mitochondrion. The enzyme catalyses 2-methyl-3-oxopropanoate + NAD(+) + CoA + H2O = propanoyl-CoA + hydrogencarbonate + NADH + H(+). It catalyses the reaction 3-oxopropanoate + NAD(+) + CoA + H2O = hydrogencarbonate + acetyl-CoA + NADH + H(+). Functionally, probable malonate and methylmalonate semialdehyde dehydrogenase involved in the catabolism of valine, thymine, and compounds catabolized by way of beta-alanine, including uracil and cytidine. In Aedes aegypti (Yellowfever mosquito), this protein is Probable methylmalonate-semialdehyde/malonate-semialdehyde dehydrogenase [acylating], mitochondrial.